The primary structure comprises 101 residues: STAS-domain containing protein PA14_20770 (101 aa).

One can recognise an STAS domain in the interval 14–101 (LTIQIQGRFD…SNFEQLFKIS (88 aa)).

Phosphorylated on a serine residue, possibly on Ser-56.

The protein resides in the secreted. The polypeptide is STAS-domain containing protein PA14_20770 (Pseudomonas aeruginosa (strain UCBPP-PA14)).